A 276-amino-acid chain; its full sequence is Ribosomal RNA small subunit methyltransferase A (276 aa).

The S-adenosyl-L-methionine site is built by N27, L29, G54, E75, D101, and N123.

Belongs to the class I-like SAM-binding methyltransferase superfamily. rRNA adenine N(6)-methyltransferase family. RsmA subfamily.

The protein resides in the cytoplasm. It carries out the reaction adenosine(1518)/adenosine(1519) in 16S rRNA + 4 S-adenosyl-L-methionine = N(6)-dimethyladenosine(1518)/N(6)-dimethyladenosine(1519) in 16S rRNA + 4 S-adenosyl-L-homocysteine + 4 H(+). In terms of biological role, specifically dimethylates two adjacent adenosines (A1518 and A1519) in the loop of a conserved hairpin near the 3'-end of 16S rRNA in the 30S particle. May play a critical role in biogenesis of 30S subunits. The chain is Ribosomal RNA small subunit methyltransferase A from Bartonella tribocorum (strain CIP 105476 / IBS 506).